Consider the following 120-residue polypeptide: MKEFQFDTLWAVMQIMLGAFFWPALIVIILTIAAFCYLLIKEKGLVACRLKGSSLVGLLGGILALYLLFSISQASISDIGGPIDLILVVLAYFGGFLASTMLLYSIIGFVKPRSCACQKN.

Helical transmembrane passes span 20–39 (FFWP…CYLL), 52–71 (GSSL…LFSI), and 86–108 (ILVV…SIIG).

Its subcellular location is the cell membrane. This is an uncharacterized protein from Pasteurella multocida (strain Pm70).